The primary structure comprises 232 residues: 7-cyano-7-deazaguanine synthase 1 (232 aa).

Cys-7 to Ala-17 lines the ATP pocket. 4 residues coordinate Zn(2+): Cys-185, Cys-193, Cys-196, and Cys-199.

It belongs to the QueC family. Requires Zn(2+) as cofactor.

The catalysed reaction is 7-carboxy-7-deazaguanine + NH4(+) + ATP = 7-cyano-7-deazaguanine + ADP + phosphate + H2O + H(+). It functions in the pathway purine metabolism; 7-cyano-7-deazaguanine biosynthesis. In terms of biological role, catalyzes the ATP-dependent conversion of 7-carboxy-7-deazaguanine (CDG) to 7-cyano-7-deazaguanine (preQ(0)). This chain is 7-cyano-7-deazaguanine synthase 1, found in Mesorhizobium japonicum (strain LMG 29417 / CECT 9101 / MAFF 303099) (Mesorhizobium loti (strain MAFF 303099)).